Consider the following 454-residue polypeptide: Aquaporin-7 (454 aa).

The Cytoplasmic segment spans residues 1–71 (MNINEPRDGG…LHLHNKTRNH (71 aa)). A helical transmembrane segment spans residues 72–92 (FVATVAEFAGTTLFLFFAFSG). The Extracellular portion of the chain corresponds to 93 to 115 (TQVALLATPANDSNVVGTPSNPA). N-linked (GlcNAc...) asparagine glycosylation is present at N103. The helical transmembrane segment at 116 to 136 (QLLYVSLCFGFSLAVNAWVFF) threads the bilayer. Over 137–163 (RISGGLFNPAVTMGMCIVGALPYFRGL) the chain is Cytoplasmic. The NPA 1 signature appears at 144–146 (NPA). The chain crosses the membrane as a helical span at residues 164–184 (LLIFAQIIGGIAAAAIVSALF). Over 185 to 202 (PGPITFRTSLGGGTSIVQ) the chain is Extracellular. Residues 203 to 223 (GLFIEMFLTAELVFTIFMLAA) form a helical membrane-spanning segment. Residues 224 to 229 (EKHKGT) are Cytoplasmic-facing. A helical transmembrane segment spans residues 230–250 (FIAPIGIGLSLFIAELTGVYF). The Extracellular segment spans residues 251 to 274 (TGGSVNPARSFGPSVVSGQFTGYH). The NPA 2 signature appears at 256–258 (NPA). The helical transmembrane segment at 275–295 (WIYWVGPILGAILASAFYKFI) threads the bilayer. The Cytoplasmic segment spans residues 296–454 (KMLEYETANP…ENLRDNTHNN (159 aa)). A disordered region spans residues 343-454 (GASHVHENGN…ENLRDNTHNN (112 aa)).

The protein belongs to the MIP/aquaporin (TC 1.A.8) family.

The protein localises to the membrane. It carries out the reaction H2O(in) = H2O(out). Functionally, water channel required to facilitate the transport of water across membranes. Involved in conidiation. The sequence is that of Aquaporin-7 from Botryotinia fuckeliana (strain B05.10) (Noble rot fungus).